Here is an 84-residue protein sequence, read N- to C-terminus: Cell division topological specificity factor (84 aa).

This sequence belongs to the MinE family.

In terms of biological role, prevents the cell division inhibition by proteins MinC and MinD at internal division sites while permitting inhibition at polar sites. This ensures cell division at the proper site by restricting the formation of a division septum at the midpoint of the long axis of the cell. The sequence is that of Cell division topological specificity factor from Pseudomonas fluorescens (strain Pf0-1).